The primary structure comprises 820 residues: Trimethylamine-N-oxide reductase (820 aa).

Positions 1 to 33 (MAITRRSFLKGVATTSAASVIGPSLLASASANA) form a signal peptide, tat-type signal. Ser-179 lines the Mo-bis(molybdopterin guanine dinucleotide) pocket.

The protein belongs to the prokaryotic molybdopterin-containing oxidoreductase family. It depends on Mo-bis(molybdopterin guanine dinucleotide) as a cofactor. Predicted to be exported by the Tat system. The position of the signal peptide cleavage has not been experimentally proven.

The protein resides in the periplasm. The catalysed reaction is trimethylamine + 2 Fe(III)-[cytochrome c] + H2O = trimethylamine N-oxide + 2 Fe(II)-[cytochrome c] + 3 H(+). In terms of biological role, reduces trimethylamine-N-oxide (TMAO) into trimethylamine; an anaerobic reaction coupled to energy-yielding reactions. This is Trimethylamine-N-oxide reductase (torA) from Vibrio vulnificus (strain YJ016).